We begin with the raw amino-acid sequence, 319 residues long: 3'-5' exoribonuclease YhaM (319 aa).

A DNA-binding region (OB) is located at residues 12–90 (EAVDGYLLIK…QLKIASIRPT (79 aa)). In terms of domain architecture, HD spans 163–279 (HVVSMLRIGK…LHLIDNIDAK (117 aa)).

Belongs to the YhaM family.

Shows a 3'-5' exoribonuclease activity. The sequence is that of 3'-5' exoribonuclease YhaM from Shouchella clausii (strain KSM-K16) (Alkalihalobacillus clausii).